Reading from the N-terminus, the 456-residue chain is Glutamate--tRNA ligase 2 (456 aa).

The 'HIGH' region motif lies at 8–18 (PSPTGYIHIGN). The short motif at 249–253 (GLSKR) is the 'KMSKS' region element. Position 252 (K252) interacts with ATP.

It belongs to the class-I aminoacyl-tRNA synthetase family. Glutamate--tRNA ligase type 1 subfamily. In terms of assembly, monomer.

It localises to the cytoplasm. It carries out the reaction tRNA(Glu) + L-glutamate + ATP = L-glutamyl-tRNA(Glu) + AMP + diphosphate. Catalyzes the attachment of glutamate to tRNA(Glu) in a two-step reaction: glutamate is first activated by ATP to form Glu-AMP and then transferred to the acceptor end of tRNA(Glu). In Bartonella bacilliformis (strain ATCC 35685 / KC583 / Herrer 020/F12,63), this protein is Glutamate--tRNA ligase 2.